A 474-amino-acid polypeptide reads, in one-letter code: Transmembrane transporter FVEG_12640 (474 aa).

A compositionally biased stretch (polar residues) spans 1 to 15; it reads MASPTISSMEQYTPS. Residues 1–39 are disordered; sequence MASPTISSMEQYTPSSKDEKIVPLHGDAAGSDTEKGESR. A run of 10 helical transmembrane segments spans residues 72–92, 133–153, 164–184, 192–212, 231–251, 275–295, 317–337, 364–384, 387–407, and 431–451; these read ILAI…LCIV, LVGV…IVTS, GTCT…FSSI, WLTW…VVAV, WAPI…NIFI, ACLV…LVIY, VAYG…QHVA, LGIN…VPIL, LLGL…PALL, and LIMI…AVLI.

It belongs to the amino acid/polyamine transporter 2 family.

It localises to the membrane. Functionally, transmembrane transporter; part of the Fusarium detoxification of benzoxazolinone cluster 2 (FDB2) involved in the degradation of benzoxazolinones produced by the host plant. Maize, wheat, and rye produce the 2 benzoxazinone phytoanticipins 2,4-dihy-droxy-7-methoxy-1,4-benzoxazin-3-one (DIMBOA) and 2,4-dihydroxy-1,4-benzoxazin-3-one (DIBOA) that, due to their inherent instability once released, spontaneously degrade to the more stable corresponding benzoxazolinones, 6-methoxy-2-benzoxazolinone (MBOA) and 2-benzoxazolinone (BOA), respectively. Might be involved in the transport of metabolites of benzoxazolinone degradation. This is Transmembrane transporter FVEG_12640 from Gibberella moniliformis (strain M3125 / FGSC 7600) (Maize ear and stalk rot fungus).